Here is a 466-residue protein sequence, read N- to C-terminus: Phosphomethylpyrimidine synthase (466 aa).

Substrate is bound by residues asparagine 80, methionine 109, tyrosine 139, histidine 175, 195-197, 236-239, and glutamate 275; these read SRG and DSLR. Zn(2+) is bound at residue histidine 279. Tyrosine 302 serves as a coordination point for substrate. Histidine 343 contacts Zn(2+). Positions 423, 426, and 431 each coordinate [4Fe-4S] cluster.

The protein belongs to the ThiC family. It depends on [4Fe-4S] cluster as a cofactor.

It carries out the reaction 5-amino-1-(5-phospho-beta-D-ribosyl)imidazole + S-adenosyl-L-methionine = 4-amino-2-methyl-5-(phosphooxymethyl)pyrimidine + CO + 5'-deoxyadenosine + formate + L-methionine + 3 H(+). It functions in the pathway cofactor biosynthesis; thiamine diphosphate biosynthesis. Catalyzes the synthesis of the hydroxymethylpyrimidine phosphate (HMP-P) moiety of thiamine from aminoimidazole ribotide (AIR) in a radical S-adenosyl-L-methionine (SAM)-dependent reaction. In Prochlorococcus marinus (strain NATL2A), this protein is Phosphomethylpyrimidine synthase.